The sequence spans 71 residues: Vitellogenin-A1 (71 aa).

An N-terminal signal peptide occupies residues 1–15; sequence MRGIILALLLAIAGS. The Vitellogenin domain occupies 24–71; it reads FSESKTSVYNYEAVILNGFPESGLSRAGIKINCKVEISAYAQRSYFLK.

In terms of tissue distribution, produced by the liver, secreted into the blood and then sequestered by receptor mediated endocytosis into growing oocytes, where it is generally cleaved, giving rise to the respective yolk components.

Precursor of the major egg-yolk proteins that are sources of nutrients during early development of oviparous organisms. This is Vitellogenin-A1 from Xenopus laevis (African clawed frog).